Here is a 343-residue protein sequence, read N- to C-terminus: Shematrin-like protein 3 (343 aa).

The signal sequence occupies residues 1–16 (MLKLVCAVVLIATVNA).

In terms of tissue distribution, prismatic layer of shell (at protein level).

It is found in the secreted. In Pinctada maxima (Silver-lipped pearl oyster), this protein is Shematrin-like protein 3.